The chain runs to 482 residues: Adenylyltransferase and sulfurtransferase MOCS3-2 (482 aa).

ATP is bound by residues G125, D146, 153 to 157, K170, and 214 to 215; these read NNLHR and DN. Zn(2+) contacts are provided by C255 and C258. C272 functions as the Glycyl thioester intermediate; for adenylyltransferase activity in the catalytic mechanism. Zn(2+)-binding residues include C330 and C333. Residues 385–480 enclose the Rhodanese domain; that stretch reads DGEPHLLLDV…WGQDVDPDFP (96 aa). Residue C440 is the Cysteine persulfide intermediate; for sulfurtransferase activity of the active site.

The protein in the N-terminal section; belongs to the HesA/MoeB/ThiF family. UBA4 subfamily. The cofactor is Zn(2+).

It is found in the cytoplasm. The enzyme catalyses [molybdopterin-synthase sulfur-carrier protein]-C-terminal Gly-Gly + ATP + H(+) = [molybdopterin-synthase sulfur-carrier protein]-C-terminal Gly-Gly-AMP + diphosphate. It catalyses the reaction [molybdopterin-synthase sulfur-carrier protein]-C-terminal Gly-Gly-AMP + S-sulfanyl-L-cysteinyl-[cysteine desulfurase] + AH2 = [molybdopterin-synthase sulfur-carrier protein]-C-terminal-Gly-aminoethanethioate + L-cysteinyl-[cysteine desulfurase] + A + AMP + 2 H(+). It participates in tRNA modification; 5-methoxycarbonylmethyl-2-thiouridine-tRNA biosynthesis. It functions in the pathway cofactor biosynthesis; molybdopterin biosynthesis. Its function is as follows. Plays a central role in 2-thiolation of mcm(5)S(2)U at tRNA wobble positions of cytosolic tRNA(Lys), tRNA(Glu) and tRNA(Gln). Also essential during biosynthesis of the molybdenum cofactor. Acts by mediating the C-terminal thiocarboxylation of sulfur carriers URM1 and MOCS2A. Its N-terminus first activates URM1 and MOCS2A as acyl-adenylates (-COAMP), then the persulfide sulfur on the catalytic cysteine is transferred to URM1 and MOCS2A to form thiocarboxylation (-COSH) of their C-terminus. The reaction probably involves hydrogen sulfide that is generated from the persulfide intermediate and that acts as a nucleophile towards URM1 and MOCS2A. Subsequently, a transient disulfide bond is formed. Does not use thiosulfate as sulfur donor; NFS1 probably acting as a sulfur donor for thiocarboxylation reactions. The sequence is that of Adenylyltransferase and sulfurtransferase MOCS3-2 from Zea mays (Maize).